An 874-amino-acid chain; its full sequence is Alanine--tRNA ligase (874 aa).

Zn(2+) is bound by residues His563, His567, Cys665, and His669.

The protein belongs to the class-II aminoacyl-tRNA synthetase family. The cofactor is Zn(2+).

The protein resides in the cytoplasm. It carries out the reaction tRNA(Ala) + L-alanine + ATP = L-alanyl-tRNA(Ala) + AMP + diphosphate. Its function is as follows. Catalyzes the attachment of alanine to tRNA(Ala) in a two-step reaction: alanine is first activated by ATP to form Ala-AMP and then transferred to the acceptor end of tRNA(Ala). Also edits incorrectly charged Ser-tRNA(Ala) and Gly-tRNA(Ala) via its editing domain. This is Alanine--tRNA ligase from Actinobacillus pleuropneumoniae serotype 7 (strain AP76).